The following is a 401-amino-acid chain: S-adenosylmethionine synthase (401 aa).

An ATP-binding site is contributed by histidine 15. Residue aspartate 17 participates in Mg(2+) binding. Residue glutamate 48 participates in K(+) binding. L-methionine-binding residues include glutamate 61 and glutamine 104. The interval 104-114 (QSPDIALGVDR) is flexible loop. ATP is bound by residues 179–181 (DGK), 246–247 (RF), aspartate 255, 261–262 (RK), alanine 278, and lysine 282. An L-methionine-binding site is contributed by aspartate 255. Residue lysine 286 coordinates L-methionine.

This sequence belongs to the AdoMet synthase family. As to quaternary structure, homotetramer; dimer of dimers. Mg(2+) serves as cofactor. The cofactor is K(+).

The protein localises to the cytoplasm. The catalysed reaction is L-methionine + ATP + H2O = S-adenosyl-L-methionine + phosphate + diphosphate. Its pathway is amino-acid biosynthesis; S-adenosyl-L-methionine biosynthesis; S-adenosyl-L-methionine from L-methionine: step 1/1. Catalyzes the formation of S-adenosylmethionine (AdoMet) from methionine and ATP. The overall synthetic reaction is composed of two sequential steps, AdoMet formation and the subsequent tripolyphosphate hydrolysis which occurs prior to release of AdoMet from the enzyme. This Petrotoga mobilis (strain DSM 10674 / SJ95) protein is S-adenosylmethionine synthase.